The chain runs to 143 residues: Ribosome maturation factor RimP (143 aa).

It belongs to the RimP family.

It localises to the cytoplasm. In terms of biological role, required for maturation of 30S ribosomal subunits. In Neisseria meningitidis serogroup C / serotype 2a (strain ATCC 700532 / DSM 15464 / FAM18), this protein is Ribosome maturation factor RimP.